The chain runs to 149 residues: Arginine repressor (149 aa).

Belongs to the ArgR family. As to quaternary structure, homohexamer.

Its subcellular location is the cytoplasm. It functions in the pathway amino-acid biosynthesis; L-arginine biosynthesis [regulation]. Regulates arginine biosynthesis genes. The polypeptide is Arginine repressor (argR) (Geobacillus stearothermophilus (Bacillus stearothermophilus)).